The chain runs to 170 residues: uncharacterized protein (170 aa).

This is an uncharacterized protein from Ureaplasma parvum serovar 3 (strain ATCC 700970).